We begin with the raw amino-acid sequence, 188 residues long: Peroxidase B (188 aa).

The protein belongs to the peroxidase family. In terms of processing, partially N-glycosylated.

Its subcellular location is the secreted. The catalysed reaction is 2 a phenolic donor + H2O2 = 2 a phenolic radical donor + 2 H2O. This is Peroxidase B from Aloe vera (Aloe).